We begin with the raw amino-acid sequence, 369 residues long: Porin-like protein BUsg_347 (369 aa).

The signal sequence occupies residues 1–23 (MKNHKSLAILIPMLFAGSTAVNA).

It belongs to the Gram-negative porin family. Homotrimer.

It is found in the cell outer membrane. In terms of biological role, forms pores that allow passive diffusion of small molecules across the membrane. This is Porin-like protein BUsg_347 from Buchnera aphidicola subsp. Schizaphis graminum (strain Sg).